The primary structure comprises 860 residues: Leucine--tRNA ligase (860 aa).

The 'HIGH' region signature appears at 42–52 (PYPSGRLHMGH). The 'KMSKS' region motif lies at 619–623 (KMSKS). Lys622 lines the ATP pocket.

Belongs to the class-I aminoacyl-tRNA synthetase family.

The protein resides in the cytoplasm. The catalysed reaction is tRNA(Leu) + L-leucine + ATP = L-leucyl-tRNA(Leu) + AMP + diphosphate. This is Leucine--tRNA ligase from Escherichia coli (strain SMS-3-5 / SECEC).